A 299-amino-acid polypeptide reads, in one-letter code: Phosphoribosylaminoimidazole-succinocarboxamide synthase (299 aa).

Belongs to the SAICAR synthetase family.

It catalyses the reaction 5-amino-1-(5-phospho-D-ribosyl)imidazole-4-carboxylate + L-aspartate + ATP = (2S)-2-[5-amino-1-(5-phospho-beta-D-ribosyl)imidazole-4-carboxamido]succinate + ADP + phosphate + 2 H(+). It participates in purine metabolism; IMP biosynthesis via de novo pathway; 5-amino-1-(5-phospho-D-ribosyl)imidazole-4-carboxamide from 5-amino-1-(5-phospho-D-ribosyl)imidazole-4-carboxylate: step 1/2. The protein is Phosphoribosylaminoimidazole-succinocarboxamide synthase of Desulfatibacillum aliphaticivorans.